A 1960-amino-acid polypeptide reads, in one-letter code: Myosin-9 (1960 aa).

Position 2 is an N-acetylalanine (Ala-2). The mediates interaction with LIMCH1 stretch occupies residues 2 to 838; sequence AQQAADKYLY…RLFTKVKPLL (837 aa). N6-acetyllysine is present on Lys-8. Tyr-11 carries the phosphotyrosine modification. Residues 27–77 form the Myosin N-terminal SH3-like domain; the sequence is AAKKLVWVPSDKSGFEPASLKEEVGEEAIVELVENGKKVKVNKDDIQKMNP. The 696-residue stretch at 81-776 folds into the Myosin motor domain; sequence SKVEDMAELT…VLAHLEEERD (696 aa). An N6-acetyllysine modification is found at Lys-102. 174 to 181 lines the ATP pocket; the sequence is GESGAGKT. N6-acetyllysine is present on residues Lys-299, Lys-435, and Lys-613. Ser-628 bears the Phosphoserine mark. The interval 654–676 is actin-binding; it reads LAKLMATLRNTNPNFVRCIIPNH. A Phosphotyrosine modification is found at Tyr-754. The region spanning 779–808 is the IQ domain; sequence ITDVIIGFQACCRGYLARKAFAKRQQQLTA. Residues 837–1926 are a coiled coil; it reads LLQVSRQEEE…LKNKLRRGDL (1090 aa). Position 850 is an N6-succinyllysine (Lys-850). 3 positions are modified to N6-acetyllysine: Lys-860, Lys-975, and Lys-1024. Phosphoserine is present on Ser-1114. The disordered stretch occupies residues 1117 to 1137; that stretch reads QEDLESERASRNKAEKQKRDL. The segment covering 1122–1137 has biased composition (basic and acidic residues); sequence SERASRNKAEKQKRDL. 8 positions are modified to N6-acetyllysine: Lys-1234, Lys-1249, Lys-1357, Lys-1392, Lys-1404, Lys-1410, Lys-1459, and Lys-1638. Lys-1669 bears the N6-succinyllysine mark. Phosphoserine is present on Ser-1714. N6-acetyllysine occurs at positions 1793, 1802, and 1845. Residues 1877–1918 form a disordered region; it reads RQLEEAEEEAQRANASRRKLQRELEDATETADAMNREVSSLK. Arg-1923 bears the Omega-N-methylarginine mark. A disordered region spans residues 1934-1960; sequence VARKGAGDCSDEEVDGKADGAEAKAAE. Phosphoserine is present on Ser-1943. A compositionally biased stretch (basic and acidic residues) spans 1948 to 1960; it reads DGKADGAEAKAAE.

The protein belongs to the TRAFAC class myosin-kinesin ATPase superfamily. Myosin family. Myosin is a hexameric protein that consists of 2 heavy chain subunits (MHC), 2 alkali light chain subunits (MLC) and 2 regulatory light chain subunits (MLC-2). Interacts with RASIP1. Interacts with DDR1. Interacts with PDLIM2. Interacts with SVIL. Interacts with HTRA3. Interacts with Myo7a. Interacts with CFAP95. Interacts with LIMCH1; independently of the integration of MYH9 into the myosin complex. Interacts with RAB3A. Interacts with ZBED4. Interacts with S100A4; this interaction increases cell motility. In terms of processing, ISGylated. Ubiquitination.

Its subcellular location is the cytoplasm. The protein localises to the cytoskeleton. It localises to the cell cortex. It is found in the cytoplasmic vesicle. The protein resides in the secretory vesicle. Its subcellular location is the cortical granule. Its function is as follows. Cellular myosin that appears to play a role in cytokinesis, cell shape, and specialized functions such as secretion and capping. Required for cortical actin clearance prior to oocyte exocytosis. Promotes cell motility in conjunction with S100A4. During cell spreading, plays an important role in cytoskeleton reorganization, focal contact formation (in the margins but not the central part of spreading cells), and lamellipodial retraction; this function is mechanically antagonized by MYH10. In Canis lupus familiaris (Dog), this protein is Myosin-9 (MYH9).